A 1087-amino-acid polypeptide reads, in one-letter code: Voltage-gated inwardly rectifying potassium channel KCNH3 (1087 aa).

The Cytoplasmic portion of the chain corresponds to 1-228 (MPAMRGLLAP…HCGALRATWD (228 aa)). One can recognise a PAS domain in the interval 18 to 90 (IATRFDGTHS…QQIRKALDEH (73 aa)). The PAC domain maps to 93-145 (FKAELILYRKSGLPFWCLLDVIPIKNEKGEVALFLVSHKDISETKNRGGPDNW). Over residues 137 to 150 (KNRGGPDNWKERGG) the composition is skewed to basic and acidic residues. The tract at residues 137-161 (KNRGGPDNWKERGGGRRRYGRAGSK) is disordered. The chain crosses the membrane as a helical span at residues 229-249 (GFILLATLYVAVTVPYSVCVS). The Extracellular segment spans residues 250 to 259 (TAREPSAARG). The helical transmembrane segment at 260–280 (PPSVCDLAVEVLFILDIVLNF) threads the bilayer. The Cytoplasmic portion of the chain corresponds to 281–302 (RTTFVSKSGQVVFAPKSICLHY). Residues 303–323 (VTTWFLLDVIAALPFDLLHAF) form a helical membrane-spanning segment. Residues 324-331 (KVNVYVGA) lie on the Extracellular side of the membrane. The helical; Voltage-sensor transmembrane segment at 332–352 (HLLKTVRLLRLLRLLPRLDRY) threads the bilayer. Residues 353-361 (SQYSAVVLT) are Cytoplasmic-facing. A helical membrane pass occupies residues 362–382 (LLMAVFALLAHWVACVWFYIG). At 383-456 (QQEIENSESE…GGPSLRSAYI (74 aa)) the chain is on the extracellular side. The disordered stretch occupies residues 416–436 (SPDGGNSSGQSENCSSSGGGS). Low complexity predominate over residues 419-431 (GGNSSGQSENCSS). Residues asparagine 421, asparagine 428, and asparagine 439 are each glycosylated (N-linked (GlcNAc...) asparagine). Positions 457–477 (TSLYFALSSLTSVGFGNVSAN) form an intramembrane region, pore-forming. The Selectivity filter signature appears at 468–473 (SVGFGN). Residues 478-482 (TDTEK) lie on the Extracellular side of the membrane. A helical transmembrane segment spans residues 483 to 503 (IFSICTMLIGALMHAVVFGNV). The Cytoplasmic portion of the chain corresponds to 504-1087 (TAIIQRMYAR…QWTQEEGTGV (584 aa)). A nucleoside 3',5'-cyclic phosphate is bound at residue 585–700 (LFEAASRGCL…FAPRFSRGLR (116 aa)). Disordered regions lie at residues 733-813 (EKET…LQLP) and 975-1061 (LMAP…PWDP). Positions 776 to 788 (TAPRPRLGGRGRP) are enriched in basic residues.

It belongs to the potassium channel family. H (Eag) (TC 1.A.1.20) subfamily. Kv12.2/KCNH3 sub-subfamily. As to quaternary structure, the potassium channel is probably composed of a homo- or heterotetrameric complex of pore-forming alpha subunits that can associate with modulating beta subunits. Interacts with KCNE1 and KCNE3; these interactions regulate KCNH3 trafficking to the plasma membrane and its subsequent voltage-gated potassium channel activity. N-glycosylated. N-glycosylation mediates traffick to the cell membrane but is not necessary for voltage-gated potassium channel activity. As to expression, highly expressed in adult and embryonic brain, in particular in cerebellum, brain stem, hippocampus, cortex and striatum. Also found in pituitary.

The protein resides in the cell membrane. It carries out the reaction K(+)(in) = K(+)(out). In terms of biological role, pore-forming (alpha) subunit of a voltage-gated inwardly rectifying potassium channel. Charactherized by a fast rate of activation during depolarization followed by a rapid inactivation at much more depolarized value causing inward rectification due to a C-type inactivation mechanism. Exhibits a rapid recovery from inactivation. In Rattus norvegicus (Rat), this protein is Voltage-gated inwardly rectifying potassium channel KCNH3.